The following is a 131-amino-acid chain: Probable flagellum biosynthesis repressor protein FlbT (131 aa).

Belongs to the FlbT family.

Has a post-transcriptional repressor function in flagellum biogenesis. Associates with the 5'-UTR of fljK mRNA and promotes its degradation. In Caulobacter sp. (strain K31), this protein is Probable flagellum biosynthesis repressor protein FlbT.